A 199-amino-acid polypeptide reads, in one-letter code: Protein GrpE (199 aa).

The segment covering 1–10 has biased composition (basic and acidic residues); sequence MTNQTEKEQV. The interval 1 to 44 is disordered; sequence MTNQTEKEQVEQDVSQATELAQEAQEAQTQDVEPELQQNNEIDP. Over residues 16–30 the composition is skewed to low complexity; that stretch reads QATELAQEAQEAQTQ.

The protein belongs to the GrpE family. As to quaternary structure, homodimer.

It is found in the cytoplasm. Participates actively in the response to hyperosmotic and heat shock by preventing the aggregation of stress-denatured proteins, in association with DnaK and GrpE. It is the nucleotide exchange factor for DnaK and may function as a thermosensor. Unfolded proteins bind initially to DnaJ; upon interaction with the DnaJ-bound protein, DnaK hydrolyzes its bound ATP, resulting in the formation of a stable complex. GrpE releases ADP from DnaK; ATP binding to DnaK triggers the release of the substrate protein, thus completing the reaction cycle. Several rounds of ATP-dependent interactions between DnaJ, DnaK and GrpE are required for fully efficient folding. The polypeptide is Protein GrpE (Glaesserella parasuis serovar 5 (strain SH0165) (Haemophilus parasuis)).